The chain runs to 332 residues: Anthranilate phosphoribosyltransferase (332 aa).

5-phospho-alpha-D-ribose 1-diphosphate is bound by residues Gly-79, 82 to 83 (GD), Ser-87, 89 to 92 (NIST), 107 to 115 (KHGNRSVSS), and Ser-119. Gly-79 is an anthranilate binding site. Ser-91 lines the Mg(2+) pocket. Residue Asn-110 participates in anthranilate binding. Position 165 (Arg-165) interacts with anthranilate. 2 residues coordinate Mg(2+): Asp-223 and Glu-224.

It belongs to the anthranilate phosphoribosyltransferase family. In terms of assembly, homodimer. It depends on Mg(2+) as a cofactor.

The enzyme catalyses N-(5-phospho-beta-D-ribosyl)anthranilate + diphosphate = 5-phospho-alpha-D-ribose 1-diphosphate + anthranilate. It participates in amino-acid biosynthesis; L-tryptophan biosynthesis; L-tryptophan from chorismate: step 2/5. In terms of biological role, catalyzes the transfer of the phosphoribosyl group of 5-phosphorylribose-1-pyrophosphate (PRPP) to anthranilate to yield N-(5'-phosphoribosyl)-anthranilate (PRA). This is Anthranilate phosphoribosyltransferase from Yersinia pestis bv. Antiqua (strain Antiqua).